The chain runs to 211 residues: Lipoprotein signal peptidase (211 aa).

3 helical membrane passes run 12–32 (LLAL…YLAV), 96–116 (AFRN…ILHY), and 127–147 (LQVA…DRLA). Active-site residues include Asp-153 and Asp-174. Residues 167-187 (WPTFNIADSLIVVGVALLVLH) form a helical membrane-spanning segment.

This sequence belongs to the peptidase A8 family.

The protein localises to the cell inner membrane. It catalyses the reaction Release of signal peptides from bacterial membrane prolipoproteins. Hydrolyzes -Xaa-Yaa-Zaa-|-(S,diacylglyceryl)Cys-, in which Xaa is hydrophobic (preferably Leu), and Yaa (Ala or Ser) and Zaa (Gly or Ala) have small, neutral side chains.. Its pathway is protein modification; lipoprotein biosynthesis (signal peptide cleavage). Its function is as follows. This protein specifically catalyzes the removal of signal peptides from prolipoproteins. This chain is Lipoprotein signal peptidase, found in Anaeromyxobacter sp. (strain Fw109-5).